The primary structure comprises 458 residues: tRNA modification GTPase MnmE (458 aa).

3 residues coordinate (6S)-5-formyl-5,6,7,8-tetrahydrofolate: Arg-26, Glu-88, and Arg-127. The region spanning 224–378 is the TrmE-type G domain; the sequence is GLSTAIIGRP…IEDRINQLFF (155 aa). Asn-234 contributes to the K(+) binding site. GTP contacts are provided by residues 234–239, 253–259, and 278–281; these read NVGKSS, TDIAGTT, and DTAG. Ser-238 serves as a coordination point for Mg(2+). Thr-253, Ile-255, and Thr-258 together coordinate K(+). Thr-259 lines the Mg(2+) pocket. Lys-458 is a binding site for (6S)-5-formyl-5,6,7,8-tetrahydrofolate.

This sequence belongs to the TRAFAC class TrmE-Era-EngA-EngB-Septin-like GTPase superfamily. TrmE GTPase family. In terms of assembly, homodimer. Heterotetramer of two MnmE and two MnmG subunits. It depends on K(+) as a cofactor.

The protein localises to the cytoplasm. Functionally, exhibits a very high intrinsic GTPase hydrolysis rate. Involved in the addition of a carboxymethylaminomethyl (cmnm) group at the wobble position (U34) of certain tRNAs, forming tRNA-cmnm(5)s(2)U34. The polypeptide is tRNA modification GTPase MnmE (Streptococcus pyogenes serotype M28 (strain MGAS6180)).